The primary structure comprises 157 residues: Protein FAM162B (157 aa).

Residues 104–123 traverse the membrane as a helical segment; the sequence is ACYIMIGLTIVACFAVIVSA.

It belongs to the UPF0389 family.

The protein localises to the membrane. The protein is Protein FAM162B (Fam162b) of Mus musculus (Mouse).